Reading from the N-terminus, the 96-residue chain is Ferredoxin (96 aa).

Positions Y4 to E94 constitute a 2Fe-2S ferredoxin-type domain. 4 residues coordinate [2Fe-2S] cluster: C40, C45, C48, and C78.

This sequence belongs to the 2Fe2S plant-type ferredoxin family. [2Fe-2S] cluster is required as a cofactor.

It localises to the plastid. Its subcellular location is the chloroplast. Ferredoxins are iron-sulfur proteins that transfer electrons in a wide variety of metabolic reactions. The polypeptide is Ferredoxin (Panax ginseng (Korean ginseng)).